The chain runs to 319 residues: MKRIGVLTSGGDSPGMNAAVRAVVRKAIYHDVEVYGIYNGYSGLISGKIEKLELGSVGDIIHRGGTKLYTARCPEFKTVEGREKGIENLKKLGIEGLVVIGGDGSYMGAKKLTEHGFPCVGVPGTIDNDIPGTDFTIGFDTALNTVIDAIDKIRDTATSHERTYVIEVMGRHAGDIALWAGLAGGAESILIPEADYDMQEIIGRLKRGHDRGKKHSIIIVAEGVGSGVEFGKRIEEETNLETRVSVLGHIQRGGSPSASDRVLASRLGAYAVELLLKGKGGRCVGIQNNKLVDHDIIEILESKHTVEPNMYQLSKELSI.

An ATP-binding site is contributed by Gly-11. 21-25 (RAVVR) is an ADP binding site. Residues 72-73 (RC) and 102-105 (GDGS) each bind ATP. Asp-103 contacts Mg(2+). Residue 125–127 (TID) participates in substrate binding. Residue Asp-127 is the Proton acceptor of the active site. Arg-154 contacts ADP. Residues Arg-162 and 169–171 (MGR) contribute to the substrate site. Residues 185–187 (GAE), Arg-211, and 213–215 (KKH) each bind ADP. Substrate contacts are provided by residues Glu-222, Arg-243, and 249–252 (HIQR).

Belongs to the phosphofructokinase type A (PFKA) family. ATP-dependent PFK group I subfamily. Prokaryotic clade 'B1' sub-subfamily. Homotetramer. The cofactor is Mg(2+).

It localises to the cytoplasm. The enzyme catalyses beta-D-fructose 6-phosphate + ATP = beta-D-fructose 1,6-bisphosphate + ADP + H(+). It participates in carbohydrate degradation; glycolysis; D-glyceraldehyde 3-phosphate and glycerone phosphate from D-glucose: step 3/4. Its activity is regulated as follows. Allosterically activated by ADP and other diphosphonucleosides, and allosterically inhibited by phosphoenolpyruvate. Its function is as follows. Catalyzes the phosphorylation of D-fructose 6-phosphate to fructose 1,6-bisphosphate by ATP, the first committing step of glycolysis. The chain is ATP-dependent 6-phosphofructokinase from Bacillus velezensis (strain DSM 23117 / BGSC 10A6 / LMG 26770 / FZB42) (Bacillus amyloliquefaciens subsp. plantarum).